The chain runs to 479 residues: ATP synthase subunit beta (479 aa).

ATP is bound at residue 168–175 (GGAGVGKT).

It belongs to the ATPase alpha/beta chains family. In terms of assembly, F-type ATPases have 2 components, CF(1) - the catalytic core - and CF(0) - the membrane proton channel. CF(1) has five subunits: alpha(3), beta(3), gamma(1), delta(1), epsilon(1). CF(0) has three main subunits: a(1), b(2) and c(9-12). The alpha and beta chains form an alternating ring which encloses part of the gamma chain. CF(1) is attached to CF(0) by a central stalk formed by the gamma and epsilon chains, while a peripheral stalk is formed by the delta and b chains.

It localises to the cell membrane. It catalyses the reaction ATP + H2O + 4 H(+)(in) = ADP + phosphate + 5 H(+)(out). Its function is as follows. Produces ATP from ADP in the presence of a proton gradient across the membrane. The catalytic sites are hosted primarily by the beta subunits. The protein is ATP synthase subunit beta of Frankia alni (strain DSM 45986 / CECT 9034 / ACN14a).